Here is a 29-residue protein sequence, read N- to C-terminus: Cytochrome b6-f complex subunit 8 (29 aa).

Residues 3–23 (IVGIAWAALMVVFTFSLSLVV) form a helical membrane-spanning segment.

The protein belongs to the PetN family. The 4 large subunits of the cytochrome b6-f complex are cytochrome b6, subunit IV (17 kDa polypeptide, PetD), cytochrome f and the Rieske protein, while the 4 small subunits are PetG, PetL, PetM and PetN. The complex functions as a dimer.

The protein localises to the plastid. It localises to the chloroplast thylakoid membrane. Functionally, component of the cytochrome b6-f complex, which mediates electron transfer between photosystem II (PSII) and photosystem I (PSI), cyclic electron flow around PSI, and state transitions. This is Cytochrome b6-f complex subunit 8 from Cryptomeria japonica (Japanese cedar).